The chain runs to 358 residues: Gibberellin receptor GID1B (358 aa).

N-acetylalanine is present on alanine 2. Positions 113–115 (HGG) match the Involved in the stabilization of the negatively charged intermediate by the formation of the oxyanion hole motif. Gibberellin A4 contacts are provided by residues 115–116 (GS), tyrosine 127, and serine 191. Serine 116, tyrosine 127, serine 191, and phenylalanine 238 together coordinate gibberellin A3. Serine 191 is an active-site residue. Residue aspartate 289 is part of the active site. Glycine 320 contributes to the gibberellin A4 binding site. Glycine 320 provides a ligand contact to gibberellin A3.

This sequence belongs to the 'GDXG' lipolytic enzyme family. As to quaternary structure, interacts with the DELLA proteins GAI, RGA, RGL1, RGL2 and RGL3 in a GA-dependent manner. Widely expressed.

The protein resides in the nucleus. Functionally, functions as a soluble gibberellin (GA) receptor. GA is an essential hormone that regulates growth and development in plants. Binds with high affinity the biologically active gibberellin GA4, but has no affinity for the biologically inactive GAs. In response to GA, interacts with specific DELLA proteins, known as repressors of GA-induced growth, and targets them for degradation via proteasome. Seems to be required for GA signaling that controls root growth, seed germination and flower development. May function as a dominant GA receptor at low GA concentrations in germination. Partially redundant with GID1A and GID1C. This Arabidopsis thaliana (Mouse-ear cress) protein is Gibberellin receptor GID1B (GID1B).